An 88-amino-acid chain; its full sequence is Small ribosomal subunit protein uS15 (88 aa).

It belongs to the universal ribosomal protein uS15 family. In terms of assembly, part of the 30S ribosomal subunit. Forms a bridge to the 50S subunit in the 70S ribosome, contacting the 23S rRNA.

One of the primary rRNA binding proteins, it binds directly to 16S rRNA where it helps nucleate assembly of the platform of the 30S subunit by binding and bridging several RNA helices of the 16S rRNA. Its function is as follows. Forms an intersubunit bridge (bridge B4) with the 23S rRNA of the 50S subunit in the ribosome. The polypeptide is Small ribosomal subunit protein uS15 (Acidobacterium capsulatum (strain ATCC 51196 / DSM 11244 / BCRC 80197 / JCM 7670 / NBRC 15755 / NCIMB 13165 / 161)).